A 266-amino-acid polypeptide reads, in one-letter code: Undecaprenyl-diphosphatase (266 aa).

Helical transmembrane passes span 1–21 (MDTF…FLPI), 39–59 (QGLS…VMYF), 87–107 (WWII…KDFI), 111–131 (FRSI…LWWA), 144–164 (VGWK…IPGT), 183–203 (AAAR…AILV), 218–238 (ALGL…HYFL), and 246–266 (MTPF…IIFL).

The protein belongs to the UppP family.

Its subcellular location is the cell inner membrane. The catalysed reaction is di-trans,octa-cis-undecaprenyl diphosphate + H2O = di-trans,octa-cis-undecaprenyl phosphate + phosphate + H(+). Functionally, catalyzes the dephosphorylation of undecaprenyl diphosphate (UPP). Confers resistance to bacitracin. In Shewanella pealeana (strain ATCC 700345 / ANG-SQ1), this protein is Undecaprenyl-diphosphatase.